The sequence spans 369 residues: DNA replication and repair protein RecF (369 aa).

Position 30–37 (30–37) interacts with ATP; that stretch reads GENGQGKT.

The protein belongs to the RecF family.

It localises to the cytoplasm. In terms of biological role, the RecF protein is involved in DNA metabolism; it is required for DNA replication and normal SOS inducibility. RecF binds preferentially to single-stranded, linear DNA. It also seems to bind ATP. The polypeptide is DNA replication and repair protein RecF (Anaeromyxobacter sp. (strain Fw109-5)).